A 260-amino-acid chain; its full sequence is Spectinomycin 9-adenylyltransferase (260 aa).

The catalysed reaction is spectinomycin + ATP = 9-O-adenylylspectinomycin + diphosphate. Functionally, mediates bacterial resistance to the antibiotic spectinomycin but not streptomycin. This chain is Spectinomycin 9-adenylyltransferase (ant1), found in Staphylococcus aureus (strain Mu50 / ATCC 700699).